Reading from the N-terminus, the 183-residue chain is Glutathione-regulated potassium-efflux system ancillary protein KefG (183 aa).

Belongs to the NAD(P)H dehydrogenase (quinone) family. KefG subfamily. Interacts with KefB.

It localises to the cell inner membrane. The enzyme catalyses a quinone + NADH + H(+) = a quinol + NAD(+). It carries out the reaction a quinone + NADPH + H(+) = a quinol + NADP(+). Regulatory subunit of a potassium efflux system that confers protection against electrophiles. Required for full activity of KefB. The protein is Glutathione-regulated potassium-efflux system ancillary protein KefG of Yersinia pestis bv. Antiqua (strain Angola).